We begin with the raw amino-acid sequence, 374 residues long: Fanconi anemia group F protein (374 aa).

In terms of assembly, belongs to the multisubunit FA complex composed of FANCA, FANCB, FANCC, FANCE, FANCF, FANCG, FANCL/PHF9 and FANCM. The complex is not found in FA patients. In complex with FANCA, FANCG and FANCL, but not with FANCC, nor FANCE, interacts with HES1; this interaction may be essential for the stability and nuclear localization of FA core complex proteins.

Its subcellular location is the nucleus. Its function is as follows. DNA repair protein that may operate in a postreplication repair or a cell cycle checkpoint function. May be implicated in interstrand DNA cross-link repair and in the maintenance of normal chromosome stability. This chain is Fanconi anemia group F protein (FANCF), found in Homo sapiens (Human).